Consider the following 428-residue polypeptide: Dihydroorotase (428 aa).

Residues histidine 60 and histidine 62 each contribute to the Zn(2+) site. Residues histidine 62–arginine 64 and asparagine 94 contribute to the substrate site. The Zn(2+) site is built by aspartate 152, histidine 179, and histidine 232. Substrate is bound at residue asparagine 278. Residue aspartate 305 participates in Zn(2+) binding. Residue aspartate 305 is part of the active site. Residues histidine 309 and phenylalanine 323 to glycine 324 contribute to the substrate site.

This sequence belongs to the metallo-dependent hydrolases superfamily. DHOase family. Class I DHOase subfamily. Zn(2+) serves as cofactor.

The catalysed reaction is (S)-dihydroorotate + H2O = N-carbamoyl-L-aspartate + H(+). It functions in the pathway pyrimidine metabolism; UMP biosynthesis via de novo pathway; (S)-dihydroorotate from bicarbonate: step 3/3. Functionally, catalyzes the reversible cyclization of carbamoyl aspartate to dihydroorotate. This chain is Dihydroorotase, found in Anoxybacillus flavithermus (strain DSM 21510 / WK1).